The chain runs to 244 residues: Protein-L-isoaspartate O-methyltransferase 2 (244 aa).

S88 is a catalytic residue.

The protein belongs to the methyltransferase superfamily. L-isoaspartyl/D-aspartyl protein methyltransferase family.

Its subcellular location is the cytoplasm. It carries out the reaction [protein]-L-isoaspartate + S-adenosyl-L-methionine = [protein]-L-isoaspartate alpha-methyl ester + S-adenosyl-L-homocysteine. In terms of biological role, catalyzes the methyl esterification of L-isoaspartyl residues in peptides and proteins that result from spontaneous decomposition of normal L-aspartyl and L-asparaginyl residues. It plays a role in the repair and/or degradation of damaged proteins. The polypeptide is Protein-L-isoaspartate O-methyltransferase 2 (Shewanella sediminis (strain HAW-EB3)).